A 231-amino-acid polypeptide reads, in one-letter code: Protein fmp52-2, mitochondrial (231 aa).

A mitochondrion-targeting transit peptide spans 1–46 (MTMTTAAVFGCTGAVGSQILATLLAIDTFPSVKTISRRLPNVQSPK).

Belongs to the FMP52 family.

It is found in the mitochondrion outer membrane. The sequence is that of Protein fmp52-2, mitochondrial (fmp522) from Neosartorya fischeri (strain ATCC 1020 / DSM 3700 / CBS 544.65 / FGSC A1164 / JCM 1740 / NRRL 181 / WB 181) (Aspergillus fischerianus).